We begin with the raw amino-acid sequence, 827 residues long: SID1 transmembrane family member 1 (827 aa).

Residues Met-1–Ala-19 form the signal peptide. Topologically, residues Ala-20 to Ser-309 are extracellular. N-linked (GlcNAc...) asparagine glycosylation is found at Asn-67, Asn-83, Asn-136, and Asn-282. Residues Ser-310–Val-330 form a helical membrane-spanning segment. The Cytoplasmic segment spans residues His-331–Lys-442. The interval Phe-344–Pro-409 is disordered. The span at Ser-375–Ser-386 shows a compositional bias: low complexity. Residues Ser-398–Pro-409 show a composition bias toward acidic residues. A helical membrane pass occupies residues Ile-443 to Val-463. Over Ile-464–Ala-494 the chain is Extracellular. A glycan (N-linked (GlcNAc...) asparagine) is linked at Asn-471. A helical membrane pass occupies residues Phe-495–Val-515. Residues Leu-516–His-541 are Cytoplasmic-facing. A helical membrane pass occupies residues Phe-542–Tyr-562. The Extracellular segment spans residues His-563 to Gln-572. N-linked (GlcNAc...) asparagine glycosylation occurs at Asn-567. The chain crosses the membrane as a helical span at residues Phe-573 to Tyr-590. Residues Gln-591–Ser-600 are Cytoplasmic-facing. The chain crosses the membrane as a helical span at residues Ala-601 to Phe-621. Topologically, residues Gly-622–Val-626 are extracellular. The chain crosses the membrane as a helical span at residues Trp-627–Ile-647. The Cytoplasmic segment spans residues Tyr-648–Arg-683. The helical transmembrane segment at Met-684–Tyr-704 threads the bilayer. Residues Arg-705–Ala-710 are Extracellular-facing. A helical membrane pass occupies residues Ser-711–Met-731. Topologically, residues Lys-732–Pro-741 are cytoplasmic. Residues Leu-742 to Phe-762 traverse the membrane as a helical segment. Over Gln-763–His-791 the chain is Extracellular. An N-linked (GlcNAc...) asparagine glycan is attached at Asn-764. Residues Asp-792–Leu-812 traverse the membrane as a helical segment. Residues Asp-813–Phe-827 are Cytoplasmic-facing.

The protein belongs to the SID1 family.

Its subcellular location is the membrane. In terms of biological role, in vitro binds long double-stranded RNA (dsRNA) (500 and 700 base pairs), but not dsRNA shorter than 300 bp. Not involved in RNA autophagy, a process in which RNA is directly imported into lysosomes in an ATP-dependent manner, and degraded. The chain is SID1 transmembrane family member 1 (Sidt1) from Mus musculus (Mouse).